Consider the following 267-residue polypeptide: MGQKINPFGYRLGITENHRSKWFSDSNKVGERYRDFVLEDDAIRKAMSKDLERAGVSRIVIERTRDRVRVDIHTARPGIVIGRRGAEAERVRAKLEKLTGKQVQLNIFEVKNAALDAQLVAQGIAEQLTNRVTFRRAMRKAQQDAMRAGAKGIRIKLSGRLGGAEMSRSEFYREGCVPLQTLRALIDYGFFEAKTTYGRIGVKVWIYKGDMTEREFEEQQAQQSNNRQGRRGDRRPRRGQRNAAPQQNAAAEAPAAAEAPAATETKE.

One can recognise a KH type-2 domain in the interval Ile43–Lys111. The interval Phe216–Glu267 is disordered. The segment covering Gln228–Gln240 has biased composition (basic residues). Residues Arg241 to Glu267 are compositionally biased toward low complexity.

This sequence belongs to the universal ribosomal protein uS3 family. As to quaternary structure, part of the 30S ribosomal subunit. Forms a tight complex with proteins S10 and S14.

Functionally, binds the lower part of the 30S subunit head. Binds mRNA in the 70S ribosome, positioning it for translation. This chain is Small ribosomal subunit protein uS3, found in Bifidobacterium adolescentis (strain ATCC 15703 / DSM 20083 / NCTC 11814 / E194a).